Consider the following 162-residue polypeptide: Deoxyuridine 5'-triphosphate nucleotidohydrolase (162 aa).

The protein belongs to the dUTPase family. Homotrimer. Mg(2+) is required as a cofactor.

The protein localises to the host cytoplasm. It is found in the virion. It catalyses the reaction dUTP + H2O = dUMP + diphosphate + H(+). Its function is as follows. The viral dUTPase may play a role in lowering the dUTP concentration in natural infections to minimize misincorporation of deoxyuridine into the viral DNA and ensure the fidelity of genome replication. In Ornithodoros (relapsing fever ticks), this protein is Deoxyuridine 5'-triphosphate nucleotidohydrolase.